The chain runs to 165 residues: MKTSRLPIAIQQAVMRRLREKLTQANLKLGRNYPEPKLSYTQRGTSAGTAWLESYEIRLNPVLLLENSEAFIEEVVPHELAHLLVWKHFGRVAPHGKEWKWMMESVLGVPARRTHQFELQSVRRNTFPYRCKCQEHQLTVRRHNRVVRGEAVYRCVHCGEQLVAK.

The SprT-like domain occupies 20 to 163 (EKLTQANLKL…RCVHCGEQLV (144 aa)). Histidine 78 serves as a coordination point for Zn(2+). Glutamate 79 is an active-site residue. Histidine 82 lines the Zn(2+) pocket.

Belongs to the SprT family. Requires Zn(2+) as cofactor.

The protein localises to the cytoplasm. In Escherichia coli O139:H28 (strain E24377A / ETEC), this protein is Protein SprT.